The following is a 351-amino-acid chain: Prostaglandin reductase 2 (351 aa).

99-100 (FY) contributes to the substrate binding site. NADP(+) contacts are provided by residues 165–168 (GACG), Lys192, Tyr208, Asn231, 253–259 (CGQISQY), 287–289 (FTV), and Asn337. Residue 288–290 (TVL) coordinates substrate.

Belongs to the NADP-dependent oxidoreductase L4BD family. In terms of assembly, monomer. In terms of tissue distribution, widely expressed with highest levels in adipose tissues.

Its subcellular location is the cytoplasm. The catalysed reaction is 13,14-dihydro-15-oxo-prostaglandin E2 + NAD(+) = 15-oxoprostaglandin E2 + NADH + H(+). It carries out the reaction 13,14-dihydro-15-oxo-prostaglandin E2 + NADP(+) = 15-oxoprostaglandin E2 + NADPH + H(+). The enzyme catalyses 13,14-dihydro-15-oxo-PGF2alpha + NADP(+) = 15-oxoprostaglandin F2alpha + NADPH + H(+). It catalyses the reaction 13,14-dihydro-15-oxo-prostaglandin E1 + NADP(+) = 15-oxoprostaglandin E1 + NADPH + H(+). The catalysed reaction is 13,14-dihydro-15-oxo-prostaglandin F1alpha + NADP(+) = 15-oxoprostaglandin F1alpha + NADPH + H(+). In terms of biological role, functions as 15-oxo-prostaglandin 13-reductase and acts on 15-keto-PGE1, 15-keto-PGE2, 15-keto-PGE1-alpha and 15-keto-PGE2-alpha with highest activity towards 15-keto-PGE2. Overexpression represses transcriptional activity of PPARG and inhibits adipocyte differentiation. The sequence is that of Prostaglandin reductase 2 from Mus musculus (Mouse).